The chain runs to 436 residues: Enolase (436 aa).

Gln-167 contacts (2R)-2-phosphoglycerate. Catalysis depends on Glu-209, which acts as the Proton donor. Positions 246, 291, and 318 each coordinate Mg(2+). (2R)-2-phosphoglycerate is bound by residues Lys-343, Arg-372, Ser-373, and Lys-394. The Proton acceptor role is filled by Lys-343.

It belongs to the enolase family. Component of the RNA degradosome, a multiprotein complex involved in RNA processing and mRNA degradation. Requires Mg(2+) as cofactor.

It localises to the cytoplasm. Its subcellular location is the secreted. The protein resides in the cell surface. The enzyme catalyses (2R)-2-phosphoglycerate = phosphoenolpyruvate + H2O. It participates in carbohydrate degradation; glycolysis; pyruvate from D-glyceraldehyde 3-phosphate: step 4/5. Catalyzes the reversible conversion of 2-phosphoglycerate (2-PG) into phosphoenolpyruvate (PEP). It is essential for the degradation of carbohydrates via glycolysis. The protein is Enolase of Actinobacillus pleuropneumoniae serotype 5b (strain L20).